The following is a 289-amino-acid chain: Shikimate dehydrogenase (NADP(+)) (289 aa).

Shikimate-binding positions include 22-24 and Thr69; that span reads SRS. Catalysis depends on Lys73, which acts as the Proton acceptor. Residue Glu85 participates in NADP(+) binding. Shikimate-binding residues include Asn94 and Asp109. NADP(+)-binding positions include 134–138, 158–163, and Ile226; these read GAGGA and NRTLSR. Tyr228 contributes to the shikimate binding site. Gly249 lines the NADP(+) pocket.

It belongs to the shikimate dehydrogenase family. Homodimer.

It carries out the reaction shikimate + NADP(+) = 3-dehydroshikimate + NADPH + H(+). It functions in the pathway metabolic intermediate biosynthesis; chorismate biosynthesis; chorismate from D-erythrose 4-phosphate and phosphoenolpyruvate: step 4/7. Its function is as follows. Involved in the biosynthesis of the chorismate, which leads to the biosynthesis of aromatic amino acids. Catalyzes the reversible NADPH linked reduction of 3-dehydroshikimate (DHSA) to yield shikimate (SA). This is Shikimate dehydrogenase (NADP(+)) from Brucella melitensis biotype 2 (strain ATCC 23457).